A 239-amino-acid chain; its full sequence is Ribonuclease 3 (239 aa).

One can recognise an RNase III domain in the interval 12–137 (RARLETAIGY…LIAAIYLDGG (126 aa)). Glu50 serves as a coordination point for Mg(2+). The active site involves Asp54. Residues Asp123 and Glu126 each contribute to the Mg(2+) site. Glu126 is a catalytic residue. Residues 162–231 (DAKTELQEWA…AMRLLEREGV (70 aa)) form the DRBM domain.

Belongs to the ribonuclease III family. Homodimer. Mg(2+) is required as a cofactor.

Its subcellular location is the cytoplasm. It catalyses the reaction Endonucleolytic cleavage to 5'-phosphomonoester.. Its function is as follows. Digests double-stranded RNA. Involved in the processing of primary rRNA transcript to yield the immediate precursors to the large and small rRNAs (23S and 16S). Processes some mRNAs, and tRNAs when they are encoded in the rRNA operon. Processes pre-crRNA and tracrRNA of type II CRISPR loci if present in the organism. The chain is Ribonuclease 3 from Sinorhizobium fredii (strain NBRC 101917 / NGR234).